We begin with the raw amino-acid sequence, 84 residues long: Large ribosomal subunit protein bL27 (84 aa).

Residues 1–21 form a disordered region; sequence MATKKAGGSSRNGRDSAGRRL.

The protein belongs to the bacterial ribosomal protein bL27 family.

This Pelagibacter ubique (strain HTCC1062) protein is Large ribosomal subunit protein bL27.